The chain runs to 199 residues: Inner membrane protein E199L (199 aa).

N-linked (GlcNAc...) asparagine; by host glycosylation is present at Asn131. A helical transmembrane segment spans residues 150–170 (INVMNHPFLTLILIILILVII).

This sequence belongs to the asfivirus E199L family. In terms of assembly, interacts with host PYCR2; this interaction results in autophagy activation. Post-translationally, contains intramolecular disulfide bonds.

The protein resides in the virion membrane. The protein localises to the host membrane. Functionally, essential for viral fusion with host endosomal membrane and core release. Not required for virus morphogenesis and egress. Induces complete autophagy through the interaction with and down-regulation of host PYCR2. The chain is Inner membrane protein E199L from African swine fever virus (isolate Tick/Malawi/Lil 20-1/1983) (ASFV).